We begin with the raw amino-acid sequence, 397 residues long: Protein ROH1D (397 aa).

A helical membrane pass occupies residues 247–267 (LIVPVYTMTTVLLFVMWALVA).

It belongs to the ROH1 family. Interacts with EXO70C2. Mostly expressed in mature pollen.

The protein localises to the membrane. The protein resides in the cytoplasm. It localises to the cytosol. Functionally, involved in the regulation of plant growth, and modulates pollen development to ensure male fertility. May also affect the composition of the inner seed coat mucilage layer. The chain is Protein ROH1D from Arabidopsis thaliana (Mouse-ear cress).